Consider the following 68-residue polypeptide: Small ribosomal subunit protein bS21 (68 aa).

Residues 36–68 (YEKPSEKRARERAAAVRRSRKLERKRAERDGIR) are disordered. Basic and acidic residues predominate over residues 37-49 (EKPSEKRARERAA). A compositionally biased stretch (basic residues) spans 50 to 59 (AVRRSRKLER).

It belongs to the bacterial ribosomal protein bS21 family.

This chain is Small ribosomal subunit protein bS21, found in Zymomonas mobilis subsp. mobilis (strain ATCC 31821 / ZM4 / CP4).